The sequence spans 126 residues: Glycine cleavage system H protein (126 aa).

Residues 22-104 form the Lipoyl-binding domain; the sequence is VAYVGITDYA…YGEGWLIKMK (83 aa). K63 is subject to N6-lipoyllysine.

Belongs to the GcvH family. The glycine cleavage system is composed of four proteins: P, T, L and H. (R)-lipoate is required as a cofactor.

Its function is as follows. The glycine cleavage system catalyzes the degradation of glycine. The H protein shuttles the methylamine group of glycine from the P protein to the T protein. The polypeptide is Glycine cleavage system H protein (Bacteroides fragilis (strain YCH46)).